The chain runs to 302 residues: Probable E3 ubiquitin-protein ligase RZFP34 (302 aa).

A CHY-type zinc finger spans residues 54–130 (EGIMQYGCAH…VRQVCISCGV (77 aa)). Zn(2+) is bound by residues Cys61, His63, Cys74, Cys75, Cys81, Cys84, His85, His100, Cys112, Cys115, Cys125, Cys128, Cys137, Cys140, His153, Cys154, Cys157, Cys160, His170, Cys171, Cys174, Cys177, His186, and Cys188. The CTCHY-type zinc finger occupies 132–196 (MGKYFCEVCK…ACVEGAMHHD (65 aa)). The segment at 197-240 (CPICFEYLFESTNDVSVLPCGHTIHVKCLREMEEHCQFACPLCS) adopts an RING-type; atypical zinc-finger fold.

It localises to the nucleus. The enzyme catalyses S-ubiquitinyl-[E2 ubiquitin-conjugating enzyme]-L-cysteine + [acceptor protein]-L-lysine = [E2 ubiquitin-conjugating enzyme]-L-cysteine + N(6)-ubiquitinyl-[acceptor protein]-L-lysine.. The protein operates within protein modification; protein ubiquitination. In terms of biological role, possesses transactivation activity in yeast cells. Involved in the regulation of stomatal aperture. May modulate the expression of genes that control stomata opening during heat shock or drought stress. This is Probable E3 ubiquitin-protein ligase RZFP34 from Oryza sativa subsp. japonica (Rice).